Here is a 432-residue protein sequence, read N- to C-terminus: Glutamate-1-semialdehyde 2,1-aminomutase (432 aa).

N6-(pyridoxal phosphate)lysine is present on K267.

The protein belongs to the class-III pyridoxal-phosphate-dependent aminotransferase family. HemL subfamily. In terms of assembly, homodimer. Requires pyridoxal 5'-phosphate as cofactor.

The protein resides in the cytoplasm. It carries out the reaction (S)-4-amino-5-oxopentanoate = 5-aminolevulinate. It participates in porphyrin-containing compound metabolism; protoporphyrin-IX biosynthesis; 5-aminolevulinate from L-glutamyl-tRNA(Glu): step 2/2. This is Glutamate-1-semialdehyde 2,1-aminomutase from Syntrophus aciditrophicus (strain SB).